The sequence spans 257 residues: 1-(5-phosphoribosyl)-5-[(5-phosphoribosylamino)methylideneamino] imidazole-4-carboxamide isomerase (257 aa).

Residue Asp8 is the Proton acceptor of the active site. Catalysis depends on Asp129, which acts as the Proton donor.

The protein belongs to the HisA/HisF family.

The protein resides in the cytoplasm. It catalyses the reaction 1-(5-phospho-beta-D-ribosyl)-5-[(5-phospho-beta-D-ribosylamino)methylideneamino]imidazole-4-carboxamide = 5-[(5-phospho-1-deoxy-D-ribulos-1-ylimino)methylamino]-1-(5-phospho-beta-D-ribosyl)imidazole-4-carboxamide. It functions in the pathway amino-acid biosynthesis; L-histidine biosynthesis; L-histidine from 5-phospho-alpha-D-ribose 1-diphosphate: step 4/9. The protein is 1-(5-phosphoribosyl)-5-[(5-phosphoribosylamino)methylideneamino] imidazole-4-carboxamide isomerase of Acaryochloris marina (strain MBIC 11017).